Reading from the N-terminus, the 234-residue chain is Endonuclease V (234 aa).

Residues aspartate 36 and aspartate 104 each coordinate Mg(2+).

The protein belongs to the endonuclease V family. It depends on Mg(2+) as a cofactor.

The protein resides in the cytoplasm. It catalyses the reaction Endonucleolytic cleavage at apurinic or apyrimidinic sites to products with a 5'-phosphate.. DNA repair enzyme involved in the repair of deaminated bases. Selectively cleaves double-stranded DNA at the second phosphodiester bond 3' to a deoxyinosine leaving behind the intact lesion on the nicked DNA. This is Endonuclease V from Yersinia enterocolitica serotype O:8 / biotype 1B (strain NCTC 13174 / 8081).